The sequence spans 479 residues: Protein phosphatase 1B (479 aa).

The segment covering Met1 to Asn14 has biased composition (basic and acidic residues). Positions Met1–Asn20 are disordered. Residue Gly2 is the site of N-myristoyl glycine attachment. A Glycyl lysine isopeptide (Lys-Gly) (interchain with G-Cter in ISG15) cross-link involves residue Lys12. The region spanning Arg23–Phe295 is the PPM-type phosphatase domain. Mn(2+) is bound by residues Asp60 and Gly61. Lys142 is covalently cross-linked (Glycyl lysine isopeptide (Lys-Gly) (interchain with G-Cter in ISG15)). The Mn(2+) site is built by Asp243 and Asp286. Ser386 is subject to Phosphoserine. Positions Val423–Ile479 are disordered. Positions Ala430–Ser439 are enriched in low complexity. Residues Asn440–Glu451 are compositionally biased toward polar residues.

This sequence belongs to the PP2C family. Monomer. Interacts with PAK6. Interacts with the phosphorylated form of IKBKB/IKKB. It depends on Mg(2+) as a cofactor. Requires Mn(2+) as cofactor. Isgylation negatively regulates its activity. In terms of processing, N-myristoylation is essential for the recognition of its substrates for dephosphorylation. Highly expressed in heart and skeletal muscle.

The protein localises to the cytoplasm. It is found in the cytosol. Its subcellular location is the membrane. The catalysed reaction is O-phospho-L-seryl-[protein] + H2O = L-seryl-[protein] + phosphate. The enzyme catalyses O-phospho-L-threonyl-[protein] + H2O = L-threonyl-[protein] + phosphate. Enzyme with a broad specificity. Dephosphorylates CDK2 and CDK6 in vitro. Dephosphorylates PRKAA1 and PRKAA2. Inhibits TBK1-mediated antiviral signaling by dephosphorylating it at 'Ser-172'. Plays an important role in the termination of TNF-alpha-mediated NF-kappa-B activation through dephosphorylating and inactivating IKBKB/IKKB. The protein is Protein phosphatase 1B (PPM1B) of Homo sapiens (Human).